The primary structure comprises 97 residues: M-zodatoxin-Lt7a (97 aa).

An N-terminal signal peptide occupies residues 1-22 (MKFYVVALALLVAFVCIAESRS). Positions 23–63 (VETERAVDADLEDDLDDLEEYLEGIAEALELEDFPDTEEAR) are excised as a propeptide. The Processing quadruplet motif signature appears at 60–63 (EEAR).

Post-translationally, cleavage of the propeptide depends on the processing quadruplet motif (XXXR, with at least one of X being E). In terms of tissue distribution, expressed by the venom gland.

The protein localises to the secreted. Does not have antimicrobial or antifungal activity. Does not have hemolytic activity against rabbit erythrocytes. However, it causes some conductance changes in planar bilayer membranes, without membrane rupture, suggesting a cytolytic function on other biological targets. It causes paralysis, but is not lethal when injected into insect (M.domestica) larvae. This Lachesana tarabaevi (Spider) protein is M-zodatoxin-Lt7a.